We begin with the raw amino-acid sequence, 261 residues long: uncharacterized protein (261 aa).

The N-terminal stretch at 1-22 (MKSIKRIGLCISLLILIIFVTS) is a signal peptide. Cys23 carries N-palmitoyl cysteine lipidation. Residue Cys23 is the site of S-diacylglycerol cysteine attachment.

This sequence belongs to the staphylococcal tandem lipoprotein family.

The protein resides in the cell membrane. This is an uncharacterized protein from Staphylococcus aureus (strain USA300).